Here is a 426-residue protein sequence, read N- to C-terminus: Serine--tRNA ligase (426 aa).

233-235 (TAE) lines the L-serine pocket. 264 to 266 (RSE) serves as a coordination point for ATP. Position 287 (glutamate 287) interacts with L-serine. 351-354 (EISS) serves as a coordination point for ATP. Position 387 (serine 387) interacts with L-serine.

The protein belongs to the class-II aminoacyl-tRNA synthetase family. Type-1 seryl-tRNA synthetase subfamily. Homodimer. The tRNA molecule binds across the dimer.

The protein resides in the cytoplasm. It carries out the reaction tRNA(Ser) + L-serine + ATP = L-seryl-tRNA(Ser) + AMP + diphosphate + H(+). The enzyme catalyses tRNA(Sec) + L-serine + ATP = L-seryl-tRNA(Sec) + AMP + diphosphate + H(+). Its pathway is aminoacyl-tRNA biosynthesis; selenocysteinyl-tRNA(Sec) biosynthesis; L-seryl-tRNA(Sec) from L-serine and tRNA(Sec): step 1/1. Its function is as follows. Catalyzes the attachment of serine to tRNA(Ser). Is also able to aminoacylate tRNA(Sec) with serine, to form the misacylated tRNA L-seryl-tRNA(Sec), which will be further converted into selenocysteinyl-tRNA(Sec). This is Serine--tRNA ligase from Ectopseudomonas mendocina (strain ymp) (Pseudomonas mendocina).